We begin with the raw amino-acid sequence, 254 residues long: Bax inhibitor 1 homolog (254 aa).

Over 1–43 (MASTSNRNFFSSNMTQIPMDEKIRIALQFNNLSQSTKQTLTKV) the chain is Cytoplasmic. Residues 44–64 (YCALAIGILTATVGVLFSMFI) form a helical membrane-spanning segment. At 65-66 (YR) the chain is on the lumenal side. Residues 67-87 (PGFLMTLLLVIGSAILFATTP) form a helical membrane-spanning segment. Residues 88-98 (RTQDYKTQVKR) are Cytoplasmic-facing. The helical transmembrane segment at 99-119 (FTLFNLVTFVTGMSSSGLIEL) threads the bilayer. Topologically, residues 120 to 126 (YMDINSS) are lumenal. A helical transmembrane segment spans residues 127-147 (IVLNAFMATCGIFISFTLFSL). The Cytoplasmic segment spans residues 148–152 (LTNKR). A helical transmembrane segment spans residues 153–173 (LYIFIGSSLASLSIGIFVLAL). The Lumenal portion of the chain corresponds to 174 to 187 (TRLFGGYSEPLDQL). Residues 188 to 208 (FILAILASSVLFIIFDTQIMV) traverse the membrane as a helical segment. The Cytoplasmic segment spans residues 209-217 (HRIENLGEK). The helical intramembrane region spans 218-238 (DVLFHAFILFYDFVDLFRVIL). Over 239 to 254 (KILAKKENKNNNKSRR) the chain is Cytoplasmic.

It belongs to the BI1 family.

Its subcellular location is the endoplasmic reticulum membrane. The sequence is that of Bax inhibitor 1 homolog from Dictyostelium discoideum (Social amoeba).